A 275-amino-acid polypeptide reads, in one-letter code: Putative carbamate hydrolase RutD (275 aa).

The region spanning 15–116 is the AB hydrolase-1 domain; sequence TVVLSSGLGG…SLVVINGWTV (102 aa).

It belongs to the AB hydrolase superfamily. Hydrolase RutD family.

It carries out the reaction carbamate + 2 H(+) = NH4(+) + CO2. Its function is as follows. Involved in pyrimidine catabolism. May facilitate the hydrolysis of carbamate, a reaction that can also occur spontaneously. This Pantoea ananatis (strain LMG 20103) protein is Putative carbamate hydrolase RutD.